Reading from the N-terminus, the 372-residue chain is Glutamate 5-kinase (372 aa).

K14 lines the ATP pocket. Substrate contacts are provided by S54, D141, and N153. 173–174 (TD) is an ATP binding site. The PUA domain maps to 280 to 358 (RGHVVIDAGA…GEIETVLGYM (79 aa)).

This sequence belongs to the glutamate 5-kinase family.

The protein localises to the cytoplasm. The catalysed reaction is L-glutamate + ATP = L-glutamyl 5-phosphate + ADP. The protein operates within amino-acid biosynthesis; L-proline biosynthesis; L-glutamate 5-semialdehyde from L-glutamate: step 1/2. Catalyzes the transfer of a phosphate group to glutamate to form L-glutamate 5-phosphate. In Burkholderia orbicola (strain AU 1054), this protein is Glutamate 5-kinase.